Reading from the N-terminus, the 755-residue chain is Tryptophan 2-monooxygenase (755 aa).

The FMN site is built by S247, E267, K275, and R295. Residue R295 coordinates substrate.

It belongs to the tryptophan 2-monooxygenase family. FMN serves as cofactor.

The catalysed reaction is L-tryptophan + O2 = indole-3-acetamide + CO2 + H2O. It functions in the pathway plant hormone metabolism; auxin biosynthesis. The protein is Tryptophan 2-monooxygenase (tms1) of Rhizobium radiobacter (Agrobacterium tumefaciens).